We begin with the raw amino-acid sequence, 579 residues long: 2-isopropylmalate synthase (579 aa).

In terms of domain architecture, Pyruvate carboxyltransferase spans 40 to 314 (PRWCAVDLRD…DPMIDFSDID (275 aa)). Residues aspartate 49, histidine 253, histidine 255, and asparagine 289 each contribute to the Mg(2+) site. The regulatory domain stretch occupies residues 456-579 (SSKEDGQWGR…VNRAIRDAQA (124 aa)).

It belongs to the alpha-IPM synthase/homocitrate synthase family. LeuA type 2 subfamily. As to quaternary structure, homodimer. It depends on Mg(2+) as a cofactor.

The protein resides in the cytoplasm. It carries out the reaction 3-methyl-2-oxobutanoate + acetyl-CoA + H2O = (2S)-2-isopropylmalate + CoA + H(+). The protein operates within amino-acid biosynthesis; L-leucine biosynthesis; L-leucine from 3-methyl-2-oxobutanoate: step 1/4. Catalyzes the condensation of the acetyl group of acetyl-CoA with 3-methyl-2-oxobutanoate (2-ketoisovalerate) to form 3-carboxy-3-hydroxy-4-methylpentanoate (2-isopropylmalate). This is 2-isopropylmalate synthase from Arthrobacter sp. (strain FB24).